Reading from the N-terminus, the 162-residue chain is Disulfide bond formation protein B (162 aa).

Topologically, residues Met-1 to Ala-8 are cytoplasmic. A helical transmembrane segment spans residues Val-9–Ala-25. Residues Ala-26–Leu-43 are Periplasmic-facing. The cysteines at positions 35 and 38 are disulfide-linked. A helical membrane pass occupies residues Cys-44–Pro-60. At Arg-61–Leu-67 the chain is on the cytoplasmic side. A helical transmembrane segment spans residues Phe-68–Ala-85. Residues Tyr-86–Val-141 lie on the Periplasmic side of the membrane. A disulfide bridge connects residues Cys-101 and Cys-128. Residues Trp-142–Arg-160 traverse the membrane as a helical segment. The Cytoplasmic portion of the chain corresponds to Ala-161–Lys-162.

Belongs to the DsbB family.

The protein localises to the cell inner membrane. Required for disulfide bond formation in some periplasmic proteins. Acts by oxidizing the DsbA protein. The sequence is that of Disulfide bond formation protein B from Neisseria meningitidis serogroup A / serotype 4A (strain DSM 15465 / Z2491).